We begin with the raw amino-acid sequence, 387 residues long: Methyltransferase phomM (387 aa).

Residues 98-223 (PHRPKDLHIL…QSVADLFTTL (126 aa)) form a methyltransferase domain region.

The protein belongs to the class I-like SAM-binding methyltransferase superfamily. Erg6/SMT family.

It functions in the pathway mycotoxin biosynthesis. In terms of biological role, methyltransferase; part of the gene cluster that mediates the biosynthesis of the phomopsins, a group of hexapeptide mycotoxins which infects lupins and causes lupinosis disease in livestock. Within the pathway, phomM acts as an S-adenosylmethionine-dependent alpha-N-methyltransferase that catalyzes two successive N-methylation reactions, converting N-desmethyl-phomopsin A to phomopsin A and phomopsin A further to an N,N-dimethylated congener called phomopsin E. The pathway starts with the processing of the precursor phomA by several endopeptidases including kexin proteases as well as the cluster-specific S41 family peptidase phomP1 and the oligopeptidase phomG to produce 10 identical copies of the hexapeptide Tyr-Val-Ile-Pro-Ile-Asp. After being excised from the precursor peptide, the core peptides are cyclized and modified post-translationally by enzymes encoded within the gene cluster. The timing and order of proteolysis of the phomA precursor and PTMs are still unknown. Two tyrosinase-like enzymes, phomQ1 and phomQ2, catalyze the chlorination and hydroxylation of Tyr, respectively. PhomYb, is proposed to be involved in the construction of the macrocyclic structure. The other 4 ustYa family proteins may be involved in PTMs that generate the unique structure of phomopsin A. PhomYa is required for the hydroxylation of C-beta of Tyr. PhomYc, phomYd, and phomYe are responsible for the biosynthesis of 2,3-dehydroisoleucine (dIle), 2,3-dehydroaspartic acid (dAsp), and 3,4-dehydroproline (dPro), respectively. While dIle formation by phomYc is indispensable for the installation of dAsp by phomYd, the order of the other PTMs have not been elucidated yet. Most of the biosynthetic enzymes likely have broad substrate specificity, and thus, there might be a metabolic grid from a precursor to phomopsin A. The enzyme(s) responsible for the biosynthesis of 3,4-dehydrovaline (dVal) have also not been identified yet. Finally, phomM acts as an S-adenosylmethionine-dependent alpha-N-methyltransferase that catalyzes two successive N-methylation reactions, converting N-desmethyl-phomopsin A to phomopsin A and phomopsin A further to an N,N-dimethylated congener called phomopsin E. The polypeptide is Methyltransferase phomM (Diaporthe leptostromiformis (Lupinosis disease fungus)).